A 225-amino-acid polypeptide reads, in one-letter code: UPF0758 protein Sden_0326 (225 aa).

The MPN domain maps to 102–224; that stretch reads ILTNPDLTRD…IVSFAERGWL (123 aa). Positions 173, 175, and 186 each coordinate Zn(2+). The JAMM motif signature appears at 173–186; it reads HNHPSGIAEPSQAD.

This sequence belongs to the UPF0758 family.

The sequence is that of UPF0758 protein Sden_0326 from Shewanella denitrificans (strain OS217 / ATCC BAA-1090 / DSM 15013).